Here is a 254-residue protein sequence, read N- to C-terminus: tRNA (guanine-N(1)-)-methyltransferase (254 aa).

S-adenosyl-L-methionine is bound by residues Gly-112 and 131–136 (IGDYIL).

It belongs to the RNA methyltransferase TrmD family. In terms of assembly, homodimer.

Its subcellular location is the cytoplasm. It catalyses the reaction guanosine(37) in tRNA + S-adenosyl-L-methionine = N(1)-methylguanosine(37) in tRNA + S-adenosyl-L-homocysteine + H(+). Functionally, specifically methylates guanosine-37 in various tRNAs. This chain is tRNA (guanine-N(1)-)-methyltransferase, found in Sulfurihydrogenibium sp. (strain YO3AOP1).